Reading from the N-terminus, the 366-residue chain is Probable protein arginine N-methyltransferase 1.2 (366 aa).

One can recognise an SAM-dependent MTase PRMT-type domain in the interval 45 to 347; sequence ADYYFDSYSH…NPRDVDIKLS (303 aa). Catalysis depends on residues Glu157 and Glu166.

This sequence belongs to the class I-like SAM-binding methyltransferase superfamily. Protein arginine N-methyltransferase family. In terms of assembly, interacts with FIB2 and PRMT11.

The protein localises to the nucleus. Its subcellular location is the cytoplasm. Functionally, methylates (mono and asymmetric dimethylation) the guanidino nitrogens of arginyl residues present in a glycine and arginine-rich domain. Type I arginine methyltransferase active on both histones and non-histone proteins. Mediates the methylation of MED36A. The sequence is that of Probable protein arginine N-methyltransferase 1.2 (PRMT12) from Arabidopsis thaliana (Mouse-ear cress).